The primary structure comprises 396 residues: 1-deoxy-D-xylulose 5-phosphate reductoisomerase (396 aa).

Residues Thr-10, Gly-11, Ser-12, Ile-13, and Asn-123 each contribute to the NADPH site. Lys-124 contributes to the 1-deoxy-D-xylulose 5-phosphate binding site. Glu-125 provides a ligand contact to NADPH. Asp-149 is a binding site for Mn(2+). 1-deoxy-D-xylulose 5-phosphate-binding residues include Ser-150, Glu-151, Ser-185, and His-208. Mn(2+) is bound at residue Glu-151. Residue Gly-214 participates in NADPH binding. 1-deoxy-D-xylulose 5-phosphate-binding residues include Ser-221, Asn-226, Lys-227, and Glu-230. Glu-230 is a binding site for Mn(2+).

The protein belongs to the DXR family. The cofactor is Mg(2+). It depends on Mn(2+) as a cofactor.

The catalysed reaction is 2-C-methyl-D-erythritol 4-phosphate + NADP(+) = 1-deoxy-D-xylulose 5-phosphate + NADPH + H(+). It participates in isoprenoid biosynthesis; isopentenyl diphosphate biosynthesis via DXP pathway; isopentenyl diphosphate from 1-deoxy-D-xylulose 5-phosphate: step 1/6. Functionally, catalyzes the NADPH-dependent rearrangement and reduction of 1-deoxy-D-xylulose-5-phosphate (DXP) to 2-C-methyl-D-erythritol 4-phosphate (MEP). The protein is 1-deoxy-D-xylulose 5-phosphate reductoisomerase of Shewanella sp. (strain ANA-3).